A 1756-amino-acid polypeptide reads, in one-letter code: Transposon Ty1-BR Gag-Pol polyprotein (1756 aa).

Polar residues-rich tracts occupy residues 1-10, 48-60, and 127-152; these read MESQQLSNYP, TKANSQQTTTPAS, and QSQFPQYPSSVGTPLSTPSPESGNTF. 3 disordered regions span residues 1 to 93, 126 to 173, and 352 to 421; these read MESQ…MMTQ, PQSQ…RPPP, and GSRN…SKST. Positions 153 to 165 are enriched in low complexity; it reads TDSSSADSDMTST. The interval 299-401 is RNA-binding; that stretch reads NNGIHINNKV…NSKSKTARAH (103 aa). Over residues 402-418 the composition is skewed to low complexity; that stretch reads NVSTSNNSPSTDNDSIS. Phosphoserine is present on Ser416. The For protease activity; shared with dimeric partner role is filled by Asp461. The interval 583–640 is integrase-type zinc finger-like; sequence NVHTSESTRKYPYPFIHRMLAHANAQTIRYSLKNNTITYFNESDVDWSSAIDYQCPDC. In terms of domain architecture, Integrase catalytic spans 660-835; it reads NSYEPFQYLH…AGLDISTLLP (176 aa). Positions 671 and 736 each coordinate Mg(2+). Disordered regions lie at residues 956 to 1088 and 1142 to 1173; these read SKAV…TEKR and PTELSDSFKELPPINSRQTNSSLGGIGDSNAY. The span at 960 to 969 shows a compositional bias: low complexity; sequence SPTDSTPPST. Polar residues-rich tracts occupy residues 1005–1017 and 1031–1043; these read STPQISDIESTDS and MSQSNTHESSYAS. Over residues 1044–1053 the composition is skewed to basic and acidic residues; the sequence is KSKDFRHSDS. Polar residues predominate over residues 1054 to 1082; the sequence is YSDNETNHTNVPISSTGGTNNKTVPQTSE. A Bipartite nuclear localization signal motif is present at residues 1179 to 1213; it reads KKRSLEDNETEIKVSRDTWNTKNMRSLEPPRSKKR. Residues 1339 to 1477 form the Reverse transcriptase Ty1/copia-type domain; that stretch reads NNYYITQLDI…DILGLEIKYQ (139 aa). The Mg(2+) site is built by Asp1347, Asp1428, Asp1429, Asp1611, Glu1653, and Asp1686. Positions 1611–1753 constitute an RNase H Ty1/copia-type domain; the sequence is DASYGNQPYY…IKTFKLLTNK (143 aa).

In terms of assembly, the capsid protein forms a homotrimer, from which the VLPs are assembled. The protease is a homodimer, whose active site consists of two apposed aspartic acid residues. Initially, virus-like particles (VLPs) are composed of the structural unprocessed proteins Gag and Gag-Pol, and also contain the host initiator methionine tRNA (tRNA(i)-Met) which serves as a primer for minus-strand DNA synthesis, and a dimer of genomic Ty RNA. Processing of the polyproteins occurs within the particle and proceeds by an ordered pathway, called maturation. First, the protease (PR) is released by autocatalytic cleavage of the Gag-Pol polyprotein yielding capsid protein p45 and a Pol-p154 precursor protein. This cleavage is a prerequisite for subsequent processing of Pol-p154 at the remaining sites to release the mature structural and catalytic proteins. Maturation takes place prior to the RT reaction and is required to produce transposition-competent VLPs.

It is found in the cytoplasm. Its subcellular location is the nucleus. It carries out the reaction DNA(n) + a 2'-deoxyribonucleoside 5'-triphosphate = DNA(n+1) + diphosphate. It catalyses the reaction Endonucleolytic cleavage to 5'-phosphomonoester.. In terms of biological role, capsid protein (CA) is the structural component of the virus-like particle (VLP), forming the shell that encapsulates the retrotransposons dimeric RNA genome. The particles are assembled from trimer-clustered units and there are holes in the capsid shells that allow for the diffusion of macromolecules. CA also has nucleocapsid-like chaperone activity, promoting primer tRNA(i)-Met annealing to the multipartite primer-binding site (PBS), dimerization of Ty1 RNA and initiation of reverse transcription. The aspartyl protease (PR) mediates the proteolytic cleavages of the Gag and Gag-Pol polyproteins after assembly of the VLP. Its function is as follows. Reverse transcriptase/ribonuclease H (RT) is a multifunctional enzyme that catalyzes the conversion of the retro-elements RNA genome into dsDNA within the VLP. The enzyme displays a DNA polymerase activity that can copy either DNA or RNA templates, and a ribonuclease H (RNase H) activity that cleaves the RNA strand of RNA-DNA heteroduplexes during plus-strand synthesis and hydrolyzes RNA primers. The conversion leads to a linear dsDNA copy of the retrotransposon that includes long terminal repeats (LTRs) at both ends. Functionally, integrase (IN) targets the VLP to the nucleus, where a subparticle preintegration complex (PIC) containing at least integrase and the newly synthesized dsDNA copy of the retrotransposon must transit the nuclear membrane. Once in the nucleus, integrase performs the integration of the dsDNA into the host genome. The protein is Transposon Ty1-BR Gag-Pol polyprotein (TY1B-BR) of Saccharomyces cerevisiae (strain ATCC 204508 / S288c) (Baker's yeast).